We begin with the raw amino-acid sequence, 490 residues long: Protein nucleotidyltransferase YdiU (490 aa).

Positions 89, 91, 92, 112, 124, 125, 175, and 182 each coordinate ATP. Asp-251 serves as the catalytic Proton acceptor. 2 residues coordinate Mg(2+): Asn-252 and Asp-261. Asp-261 lines the ATP pocket.

The protein belongs to the SELO family. The cofactor is Mg(2+). It depends on Mn(2+) as a cofactor.

The catalysed reaction is L-seryl-[protein] + ATP = 3-O-(5'-adenylyl)-L-seryl-[protein] + diphosphate. The enzyme catalyses L-threonyl-[protein] + ATP = 3-O-(5'-adenylyl)-L-threonyl-[protein] + diphosphate. It catalyses the reaction L-tyrosyl-[protein] + ATP = O-(5'-adenylyl)-L-tyrosyl-[protein] + diphosphate. It carries out the reaction L-histidyl-[protein] + UTP = N(tele)-(5'-uridylyl)-L-histidyl-[protein] + diphosphate. The catalysed reaction is L-seryl-[protein] + UTP = O-(5'-uridylyl)-L-seryl-[protein] + diphosphate. The enzyme catalyses L-tyrosyl-[protein] + UTP = O-(5'-uridylyl)-L-tyrosyl-[protein] + diphosphate. Nucleotidyltransferase involved in the post-translational modification of proteins. It can catalyze the addition of adenosine monophosphate (AMP) or uridine monophosphate (UMP) to a protein, resulting in modifications known as AMPylation and UMPylation. This is Protein nucleotidyltransferase YdiU from Vibrio vulnificus (strain YJ016).